The following is a 250-amino-acid chain: ADPR responsive transcriptional repressor NtrR (250 aa).

The Nudix hydrolase domain maps to 26 to 157 (LMTVDMAIFS…DHHDLLQQAF (132 aa)). The short motif at 62–85 (GFVDLEQDQNLMACAHRKLLEKTG) is the Nudix box element. The tract at residues 164-237 (TRYTALPISL…RFALQDYDFN (74 aa)) is winged helix-like DNA-binding region.

DNA binding is efficiently suppressed in the presence of ADP-ribose (ADPR) or phospho-ADPR. Accumulation of ADPR resulting from NAD degradation may be interpreted by the cell as a signal to activate recycling of nicotinamide. Functionally, involved in the transcriptional regulation of the nondeamidating salvage pathway for production of NAD from nicotinamide. Represses expression of the prs-nadV-nrtR operon by binding to the DNA region located upstream of the operon, thus blocking the nondeamidating pathway. The sequence is that of ADPR responsive transcriptional repressor NtrR from Acinetobacter baylyi (strain ATCC 33305 / BD413 / ADP1).